Consider the following 207-residue polypeptide: Thaumatin-like protein 1 (207 aa).

Disulfide bonds link C9-C202, C50-C60, C65-C71, C117-C191, C122-C174, C130-C140, C144-C153, and C154-C161.

The protein belongs to the thaumatin family. Monomer. In terms of processing, not glycosylated.

The protein resides in the secreted. Its function is as follows. Acidic thaumatin-like protein. Exhibits weak beta-1,3-glucanase activity with laminarin as substrate. The chain is Thaumatin-like protein 1 (TLP1) from Manilkara zapota (Sapodilla plum).